The primary structure comprises 104 residues: L-rhamnose mutarotase (104 aa).

Tyrosine 18 is a substrate binding site. The active-site Proton donor is the histidine 22. Substrate contacts are provided by residues tyrosine 41 and tryptophan 76–tryptophan 77.

The protein belongs to the rhamnose mutarotase family. In terms of assembly, homodimer.

The protein localises to the cytoplasm. It catalyses the reaction alpha-L-rhamnose = beta-L-rhamnose. It participates in carbohydrate metabolism; L-rhamnose metabolism. Involved in the anomeric conversion of L-rhamnose. The sequence is that of L-rhamnose mutarotase from Pectobacterium carotovorum subsp. carotovorum (strain PC1).